The primary structure comprises 159 residues: Putative 4-hydroxy-4-methyl-2-oxoglutarate aldolase (159 aa).

Substrate is bound by residues 74-77 (GDNL) and arginine 96. Residue aspartate 97 coordinates a divalent metal cation.

It belongs to the class II aldolase/RraA-like family. As to quaternary structure, homotrimer. A divalent metal cation is required as a cofactor.

It catalyses the reaction 4-hydroxy-4-methyl-2-oxoglutarate = 2 pyruvate. The enzyme catalyses oxaloacetate + H(+) = pyruvate + CO2. Its function is as follows. Catalyzes the aldol cleavage of 4-hydroxy-4-methyl-2-oxoglutarate (HMG) into 2 molecules of pyruvate. Also contains a secondary oxaloacetate (OAA) decarboxylase activity due to the common pyruvate enolate transition state formed following C-C bond cleavage in the retro-aldol and decarboxylation reactions. The chain is Putative 4-hydroxy-4-methyl-2-oxoglutarate aldolase from Bacillus cereus (strain ZK / E33L).